We begin with the raw amino-acid sequence, 471 residues long: MTTSTPQTMYEKLWQTHLVEATKGETPLLYVDRHLIHEVTSPQAFANLRFHNRPVRHPERTIATMDHNISTRSIKIDAAGEGAANQLRALAINCKDFGIELFDMGHKNQGIAHVIGPELGLTLPGTIIVCGDSHTATHGAFGALAFGIGTSEVEHVFATQTLRQNKAKTMKIEVKGHVGAGISAKDIILAIIGKTGSAGATGYVVEYCGEAIEALSMEERMTVCNMSIEFGAKAGLIAPDQTTFDYVEGKEYAPKGEVFEQAVVDWKNLKSDADAQFDAVLTLDAKDIKAQVTWGTNPGQVISVDGTVPSPEDFSDPVEKESCVSALNYMGLTAGTKMTDIHVNKVFIGSCTNSRIEDLRAAAGVVQKYEGQQVVKTIDAIIVPGSYRVKEQAESEGLDKIFTDAGFEWRLPGCSMCLGMNDDVLEEGDRCASTSNRNFEGRQGRGSRTHLVSPEMAAAAAITGHFVDLNA.

[4Fe-4S] cluster is bound by residues C351, C414, and C417.

The protein belongs to the aconitase/IPM isomerase family. LeuC type 1 subfamily. In terms of assembly, heterodimer of LeuC and LeuD. Requires [4Fe-4S] cluster as cofactor.

The enzyme catalyses (2R,3S)-3-isopropylmalate = (2S)-2-isopropylmalate. The protein operates within amino-acid biosynthesis; L-leucine biosynthesis; L-leucine from 3-methyl-2-oxobutanoate: step 2/4. Its function is as follows. Catalyzes the isomerization between 2-isopropylmalate and 3-isopropylmalate, via the formation of 2-isopropylmaleate. In Colwellia psychrerythraea (strain 34H / ATCC BAA-681) (Vibrio psychroerythus), this protein is 3-isopropylmalate dehydratase large subunit.